The primary structure comprises 202 residues: ATP-dependent dethiobiotin synthetase BioD (202 aa).

Residue 12 to 17 (GIGKTI) participates in ATP binding. Thr-16 serves as a coordination point for Mg(2+). Residue Lys-32 is part of the active site. Residue Ser-36 participates in substrate binding. ATP-binding positions include Asp-43, 94 to 97 (EGAG), and 178 to 180 (PVV). The Mg(2+) site is built by Asp-43 and Glu-94.

This sequence belongs to the dethiobiotin synthetase family. As to quaternary structure, homodimer. Requires Mg(2+) as cofactor.

It localises to the cytoplasm. The catalysed reaction is (7R,8S)-7,8-diammoniononanoate + CO2 + ATP = (4R,5S)-dethiobiotin + ADP + phosphate + 3 H(+). It functions in the pathway cofactor biosynthesis; biotin biosynthesis; biotin from 7,8-diaminononanoate: step 1/2. In terms of biological role, catalyzes a mechanistically unusual reaction, the ATP-dependent insertion of CO2 between the N7 and N8 nitrogen atoms of 7,8-diaminopelargonic acid (DAPA, also called 7,8-diammoniononanoate) to form a ureido ring. This Sphingopyxis alaskensis (strain DSM 13593 / LMG 18877 / RB2256) (Sphingomonas alaskensis) protein is ATP-dependent dethiobiotin synthetase BioD.